The following is a 119-amino-acid chain: Autophagy-related protein 8h (119 aa).

Gly119 carries the Phosphatidylethanolamine amidated glycine lipid modification.

The protein belongs to the ATG8 family. In terms of assembly, interacts with ATG4. Interacts with ATI1. Post-translationally, gly-119 forms then a thioester bond with the 'Cys-558' of ATG7 (E1-like activating enzyme) before being transferred to the 'Cys-258' of ATG3 (the specific E2 conjugating enzyme), in order to be finally amidated with phosphatidylethanolamine. This lipid modification anchors ATG8 to autophagosomes. Constitutively expressed.

It is found in the cytoplasmic vesicle. The protein resides in the autophagosome membrane. Its subcellular location is the vacuole membrane. The protein localises to the cytoplasm. It localises to the cytoskeleton. In terms of biological role, ubiquitin-like modifier involved in autophagosomes formation. May mediate the delivery of the autophagosomes to the vacuole via the microtubule cytoskeleton. This Arabidopsis thaliana (Mouse-ear cress) protein is Autophagy-related protein 8h (ATG8H).